Here is a 336-residue protein sequence, read N- to C-terminus: HTH-type transcriptional regulator RafR (336 aa).

Residues 2 to 55 (SLKAIATTLGISVTTVSRALGGFSDVAASTRERVEAEARRRGYRPNTQARRLKT) form the HTH lacI-type domain. Residues 3–22 (LKAIATTLGISVTTVSRALG) constitute a DNA-binding region (H-T-H motif).

As to quaternary structure, homodimer.

Repressor that negatively controls the expression of the raffinose (raf) operon by binding to the raf operator (rafO) DNA. Acts by binding to two operator sites, O1 and 02, which flank the -35 raf promoter box. RafR bound to 02 alone results in 45 % repression of transcription, whereas RafR bound to O1 leads to only 6% repression. This chain is HTH-type transcriptional regulator RafR, found in Escherichia coli.